The primary structure comprises 570 residues: Sulfite reductase [NADPH] hemoprotein beta-component (570 aa).

C434, C440, C479, and C483 together coordinate [4Fe-4S] cluster. C483 provides a ligand contact to siroheme.

The protein belongs to the nitrite and sulfite reductase 4Fe-4S domain family. As to quaternary structure, alpha(8)-beta(8). The alpha component is a flavoprotein, the beta component is a hemoprotein. Siroheme serves as cofactor. [4Fe-4S] cluster is required as a cofactor.

The enzyme catalyses hydrogen sulfide + 3 NADP(+) + 3 H2O = sulfite + 3 NADPH + 4 H(+). It participates in sulfur metabolism; hydrogen sulfide biosynthesis; hydrogen sulfide from sulfite (NADPH route): step 1/1. Its function is as follows. Component of the sulfite reductase complex that catalyzes the 6-electron reduction of sulfite to sulfide. This is one of several activities required for the biosynthesis of L-cysteine from sulfate. This is Sulfite reductase [NADPH] hemoprotein beta-component from Escherichia coli O7:K1 (strain IAI39 / ExPEC).